We begin with the raw amino-acid sequence, 383 residues long: Deoxyguanosinetriphosphate triphosphohydrolase-like protein (383 aa).

The HD domain occupies 62–198 (RLTHSLEVST…AALADDISYI (137 aa)).

This sequence belongs to the dGTPase family. Type 2 subfamily.

This chain is Deoxyguanosinetriphosphate triphosphohydrolase-like protein, found in Rickettsia felis (strain ATCC VR-1525 / URRWXCal2) (Rickettsia azadi).